The chain runs to 256 residues: Pimeloyl-[acyl-carrier protein] methyl ester esterase (256 aa).

The AB hydrolase-1 domain maps to His-15–Pro-242. Substrate is bound by residues Trp-22, Ser-82 to Leu-83, and Phe-143 to Gln-147. The active-site Nucleophile is the Ser-82. Active-site residues include Asp-207 and His-235. His-235 contributes to the substrate binding site.

This sequence belongs to the AB hydrolase superfamily. Carboxylesterase BioH family. Monomer.

The protein localises to the cytoplasm. It carries out the reaction 6-carboxyhexanoyl-[ACP] methyl ester + H2O = 6-carboxyhexanoyl-[ACP] + methanol + H(+). It participates in cofactor biosynthesis; biotin biosynthesis. Its function is as follows. The physiological role of BioH is to remove the methyl group introduced by BioC when the pimeloyl moiety is complete. It allows to synthesize pimeloyl-ACP via the fatty acid synthetic pathway through the hydrolysis of the ester bonds of pimeloyl-ACP esters. The protein is Pimeloyl-[acyl-carrier protein] methyl ester esterase of Escherichia coli (strain K12 / MC4100 / BW2952).